We begin with the raw amino-acid sequence, 315 residues long: Olfactory receptor 52R1 (315 aa).

Topologically, residues 1–28 (MVLASGNSSSHPVSFILLGIPGLESFQL) are extracellular. N-linked (GlcNAc...) asparagine glycosylation occurs at Asn7. The helical transmembrane segment at 29–49 (WIAFPFCATYAVAVVGNITLL) threads the bilayer. At 50–57 (HVIRIDHT) the chain is on the cytoplasmic side. A helical membrane pass occupies residues 58 to 78 (LHEPMYLFLAMLAITDLVLSS). Residues 79–102 (STQPKMLAIFWFHAHEIQYHACLI) are Extracellular-facing. A disulfide bond links Cys100 and Cys192. A helical membrane pass occupies residues 103–123 (QVFFIHAFSSVESGVLMAMAL). The Cytoplasmic segment spans residues 124-142 (DCYVAICFPLRHSSILTPS). The helical transmembrane segment at 143–163 (VVIKLGTIVMLRGLLWVSPFC) threads the bilayer. Topologically, residues 164–199 (FMVSRMPFCQHQAIPQSYCEHMAVLKLVCADTSISR) are extracellular. A helical membrane pass occupies residues 200 to 220 (GNGLFVAFSVAGFDMIVIGMS). Over 221–240 (YVMILRAVLQLPSGEARLKA) the chain is Cytoplasmic. Residues 241-261 (FSTRSSHICVILALYIPALFS) form a helical membrane-spanning segment. The Extracellular portion of the chain corresponds to 262-276 (FLTYRFGHDVPRVVH). The chain crosses the membrane as a helical span at residues 277 to 297 (ILFANLYLLIPPMLNPIIYGV). Over 298–315 (RTKQIGDRVIQGCCGNIP) the chain is Cytoplasmic.

Belongs to the G-protein coupled receptor 1 family.

The protein localises to the cell membrane. In terms of biological role, odorant receptor. The sequence is that of Olfactory receptor 52R1 (OR52R1) from Homo sapiens (Human).